The sequence spans 337 residues: Probable arabinose 5-phosphate isomerase (337 aa).

The SIS domain maps to Val-58–Phe-201. Substrate-binding positions include Gly-92–Thr-93, His-99, His-105, Lys-131–Gly-140, Thr-165–Glu-167, Thr-237, and Asp-290. A Zn(2+)-binding site is contributed by His-99. Residues Met-227–Leu-284 enclose the CBS 1 domain. The 46-residue stretch at Met-292–Ser-337 folds into the CBS 2 domain.

It belongs to the SIS family. GutQ/KpsF subfamily.

It carries out the reaction D-arabinose 5-phosphate = D-ribulose 5-phosphate. Catalyzes the reversible aldol-ketol isomerization between D-ribulose 5-phosphate (Ru5P) and D-arabinose 5-phosphate (A5P). This Haemophilus influenzae (strain ATCC 51907 / DSM 11121 / KW20 / Rd) protein is Probable arabinose 5-phosphate isomerase.